A 99-amino-acid chain; its full sequence is Large ribosomal subunit protein eL30 (99 aa).

The protein belongs to the eukaryotic ribosomal protein eL30 family.

The sequence is that of Large ribosomal subunit protein eL30 (rpl30e) from Pyrococcus horikoshii (strain ATCC 700860 / DSM 12428 / JCM 9974 / NBRC 100139 / OT-3).